A 185-amino-acid chain; its full sequence is Ribosome maturation factor RimM (185 aa).

One can recognise a PRC barrel domain in the interval 105–184 (KDEYYWKDII…IVVVDWEIYK (80 aa)).

This sequence belongs to the RimM family. As to quaternary structure, binds ribosomal protein uS19.

The protein localises to the cytoplasm. In terms of biological role, an accessory protein needed during the final step in the assembly of 30S ribosomal subunit, possibly for assembly of the head region. Essential for efficient processing of 16S rRNA. May be needed both before and after RbfA during the maturation of 16S rRNA. It has affinity for free ribosomal 30S subunits but not for 70S ribosomes. The chain is Ribosome maturation factor RimM from Blochmanniella floridana.